The sequence spans 193 residues: Auxin-induced protein 22D (193 aa).

Residues 16-68 (ATELRLGLPGSDEPEKRATARSNKRSSPEASDEESISNGSDVTKEDNVVPPAK) form a disordered region. The EAR-like (transcriptional repression) signature appears at 19 to 23 (LRLGL). The PB1 domain maps to 97–184 (GMYVKVSMAG…SCKRLRIMKG (88 aa)).

It belongs to the Aux/IAA family. Homodimers and heterodimers.

The protein localises to the nucleus. Its function is as follows. Aux/IAA proteins are short-lived transcriptional factors that function as repressors of early auxin response genes at low auxin concentrations. Repression is thought to result from the interaction with auxin response factors (ARFs), proteins that bind to the auxin-responsive promoter element (AuxRE). Formation of heterodimers with ARF proteins may alter their ability to modulate early auxin response genes expression. The chain is Auxin-induced protein 22D (AUX22D) from Vigna radiata var. radiata (Mung bean).